The sequence spans 357 residues: GDP-mannose transporter 2 (357 aa).

The Cytoplasmic portion of the chain corresponds to 1–33; the sequence is MASARNGVSKDELLPVYERRSQRDGDISGSVKS. A helical transmembrane segment spans residues 34 to 54; that stretch reads FASTIGNSASAAVLAYCLSSI. Residues 55–68 are Lumenal-facing; it reads SMTLVNKYVVSGAS. A helical transmembrane segment spans residues 69–89; it reads WNLSFLYLAMQSFIGTVAILA. At 90–107 the chain is on the cytoplasmic side; sequence CKKTGLIQNLALFDLKKA. A helical membrane pass occupies residues 108–128; the sequence is QTWLPISLLLVGMIYTGNKAL. A topological domain (lumenal) is located at residue glutamine 129. A helical transmembrane segment spans residues 130 to 150; the sequence is FLSVPVYTIFKNLTIIVIAYG. The Cytoplasmic portion of the chain corresponds to 151–161; it reads EVLMVGGGVKP. The chain crosses the membrane as a helical span at residues 162–181; that stretch reads LALLSFGLMVLSSVVAAWAD. The Lumenal portion of the chain corresponds to 182–196; sequence IQNATTATVGASSDS. The N-linked (GlcNAc...) asparagine glycan is linked to asparagine 184. Residues 197-217 form a helical membrane-spanning segment; it reads TAAALSALNAGYAWMGTNVIF. The Cytoplasmic portion of the chain corresponds to 218–236; the sequence is SASYALGMRRVIKKTNFDN. The chain crosses the membrane as a helical span at residues 237-257; sequence WDVMFYNNLLSIPILLLASVL. At 258-277 the chain is on the lumenal side; the sequence is AEDWSSENLQRNFPAELRQS. Residues 278-298 traverse the membrane as a helical segment; the sequence is LFIGILYSGVAAVFISYCTAW. At 299 to 306 the chain is on the cytoplasmic side; sequence CVRATSST. Residues 307-327 traverse the membrane as a helical segment; that stretch reads TYAMVGALNKLPLAVAGIVFF. Residues 328-332 lie on the Lumenal side of the membrane; it reads AAPVT. A helical transmembrane segment spans residues 333–352; it reads FGSVSAIVLGFISGLVYARA. The Cytoplasmic segment spans residues 353 to 357; it reads KSTGA.

Belongs to the TPT transporter family. SLC35D subfamily. In terms of assembly, homooligomer.

The protein localises to the golgi apparatus membrane. The protein resides in the cytoplasmic vesicle membrane. It localises to the endoplasmic reticulum membrane. Its function is as follows. Involved in the import of GDP-mannose from the cytoplasm into the Golgi lumen. This is GDP-mannose transporter 2 (gmt2) from Neosartorya fischeri (strain ATCC 1020 / DSM 3700 / CBS 544.65 / FGSC A1164 / JCM 1740 / NRRL 181 / WB 181) (Aspergillus fischerianus).